The sequence spans 505 residues: Flagellin (505 aa).

Belongs to the bacterial flagellin family.

It is found in the secreted. It localises to the bacterial flagellum. Functionally, flagellin is the subunit protein which polymerizes to form the filaments of bacterial flagella. In Salmonella montevideo, this protein is Flagellin (fliC).